Consider the following 134-residue polypeptide: Secretin (134 aa).

Positions 1-21 (MATRALLLLLLLPPLLLLAGC) are cleaved as a signal peptide. A propeptide spanning residues 22–31 (AARPAPPRAP) is cleaved from the precursor. Valine 59 carries the post-translational modification Valine amide. Serine 63 carries the post-translational modification Phosphoserine. Residues 63–134 (SQQDPENNTA…PAAEGSPMPP (72 aa)) constitute a propeptide that is removed on maturation.

The protein belongs to the glucagon family.

The protein resides in the secreted. Functionally, hormone involved in different processes, such as regulation of the pH of the duodenal content, food intake and water homeostasis. Exerts its biological effects by binding to secretin receptor (SCTR), a G-protein coupled receptor expressed in the basolateral domain of several cells. Acts as a key gastrointestinal hormone by regulating the pH of the duodenal content. Secreted by S cells of the duodenum in the crypts of Lieberkuehn and regulates the pH of the duodenum by (1) inhibiting the secretion of gastric acid from the parietal cells of the stomach and (2) stimulating the production of bicarbonate (NaHCO(3)) from the ductal cells of the pancreas. Production of bicarbonate is essential to neutralize the pH and ensure no damage is done to the small intestine by the gastric acid. In addition to regulating the pH of the duodenal content, plays a central role in diet induced thermogenesis: acts as a non-sympathetic brown fat (BAT) activator mediating prandial thermogenesis, which consequentially induces satiation. Mechanistically, secretin released by the gut after a meal binds to secretin receptor (SCTR) in brown adipocytes, activating brown fat thermogenesis by stimulating lipolysis, which is sensed in the brain and promotes satiation. Also able to stimulate lipolysis in white adipocytes. Also plays an important role in cellular osmoregulation: released into the systemic circulation in response to hyperosmolality and acts at different levels in the hypothalamus, pituitary and kidney to regulate water homeostasis. Also plays a role in the central nervous system, possibly by acting as a neuropeptide hormone: required for hippocampal synaptic function and neural progenitor cells maintenance. The protein is Secretin of Sus scrofa (Pig).